The primary structure comprises 316 residues: Pantothenate kinase (316 aa).

95 to 102 (GSVAVGKS) contacts ATP.

Belongs to the prokaryotic pantothenate kinase family.

The protein localises to the cytoplasm. It carries out the reaction (R)-pantothenate + ATP = (R)-4'-phosphopantothenate + ADP + H(+). Its pathway is cofactor biosynthesis; coenzyme A biosynthesis; CoA from (R)-pantothenate: step 1/5. This Pectobacterium carotovorum subsp. carotovorum (strain PC1) protein is Pantothenate kinase.